We begin with the raw amino-acid sequence, 21 residues long: thr operon leader peptide (21 aa).

Belongs to the thr operon leader peptide family.

In terms of biological role, this protein is involved in control of the biosynthesis of threonine. The polypeptide is thr operon leader peptide (Shigella boydii serotype 18 (strain CDC 3083-94 / BS512)).